The sequence spans 490 residues: Lipoprotein lipase (490 aa).

The first 25 residues, 1–25, serve as a signal peptide directing secretion; sequence MERGRGMGKTALLAVLCLCLRGAAG. The segment at 32-53 is interaction with GPIHBP1; sequence MNFEGIESKFSLRTPAEPDEDV. Cys54 and Cys67 form a disulfide bridge. Residue Asn70 is glycosylated (N-linked (GlcNAc...) (complex) asparagine). The residue at position 121 (Tyr121) is a 3'-nitrotyrosine. The Nucleophile role is filled by Ser159. Asp183 acts as the Charge relay system in catalysis. Position 191 is a 3'-nitrotyrosine (Tyr191). Ca(2+)-binding residues include Ala194, Arg197, Ser199, and Asp202. Residues Cys243 and Cys266 are joined by a disulfide bond. Residues 243-266 form an essential for determining substrate specificity region; it reads CNLGEALRLIAEKGFSDVDQLVKC. The active-site Charge relay system is His268. 2 disulfide bridges follow: Cys291–Cys310 and Cys302–Cys305. The 124-residue stretch at 341–464 folds into the PLAT domain; the sequence is FHYQVKIHFF…KGEEAAIFVK (124 aa). Tyr343 is modified (3'-nitrotyrosine). N-linked (GlcNAc...) asparagine glycosylation is found at Asn354 and Asn386. The important for interaction with lipoprotein particles stretch occupies residues 417-421; that stretch reads WSDWW. An important for heparin binding region spans residues 430–434; that stretch reads RVRVK. 430–441 provides a ligand contact to heparin; it reads RVRVKSGETQKK. Positions 443–467 are interaction with GPIHBP1; it reads VFCSRDGSSRLGKGEEAAIFVKCLE. Residues Cys445 and Cys465 are joined by a disulfide bond. The interval 471 to 490 is disordered; it reads SRKRGGAKKASKENSAHESA. Over residues 480–490 the composition is skewed to basic and acidic residues; it reads ASKENSAHESA.

It belongs to the AB hydrolase superfamily. Lipase family. Homodimer. Interacts with GPIHBP1 with 1:1 stoichiometry. Interacts with APOC2; the interaction activates LPL activity in the presence of lipids. Interaction with heparan sulfate proteoglycans is required to protect LPL against loss of activity. Associates with lipoprotein particles in blood plasma. Interacts with LMF1 and SEL1L; interaction with SEL1L is required to prevent aggregation of newly synthesized LPL in the endoplasmic reticulum (ER), and for normal export of LPL from the ER to the extracellular space. Post-translationally, N-glycan at Asn-70 is a triantennary complex oligosaccharide containing sialic acid, galactose, mannose, and N-acetylglucosamine, the reducing GlcNAc being sulfated at C6. In terms of processing, tyrosine nitration after lipopolysaccharide (LPS) challenge down-regulates the lipase activity.

It is found in the cell membrane. Its subcellular location is the secreted. It localises to the extracellular space. The protein resides in the extracellular matrix. It carries out the reaction a triacylglycerol + H2O = a diacylglycerol + a fatty acid + H(+). The enzyme catalyses a 1,2-diacyl-sn-glycero-3-phosphocholine + H2O = a 2-acyl-sn-glycero-3-phosphocholine + a fatty acid + H(+). It catalyses the reaction 1,2,3-tri-(9Z-octadecenoyl)-glycerol + H2O = di-(9Z)-octadecenoylglycerol + (9Z)-octadecenoate + H(+). The catalysed reaction is 1,2-di-(9Z-octadecenoyl)-sn-glycero-3-phosphocholine + H2O = (9Z-octadecenoyl)-sn-glycero-3-phosphocholine + (9Z)-octadecenoate + H(+). It carries out the reaction 1,2,3-tributanoylglycerol + H2O = dibutanoylglycerol + butanoate + H(+). The enzyme catalyses 1,2-dihexadecanoyl-sn-glycero-3-phosphocholine + H2O = hexadecanoyl-sn-glycero-3-phosphocholine + hexadecanoate + H(+). Ca(2+) binding promotes protein stability and formation of the active homodimer. Key enzyme in triglyceride metabolism. Catalyzes the hydrolysis of triglycerides from circulating chylomicrons and very low density lipoproteins (VLDL), and thereby plays an important role in lipid clearance from the blood stream, lipid utilization and storage. Although it has both phospholipase and triglyceride lipase activities it is primarily a triglyceride lipase with low but detectable phospholipase activity. Mediates margination of triglyceride-rich lipoprotein particles in capillaries. Recruited to its site of action on the luminal surface of vascular endothelium by binding to GPIHBP1 and cell surface heparan sulfate proteoglycans. In Gallus gallus (Chicken), this protein is Lipoprotein lipase (LPL).